Here is a 179-residue protein sequence, read N- to C-terminus: Large ribosomal subunit protein uL5 (179 aa).

Belongs to the universal ribosomal protein uL5 family. In terms of assembly, part of the 50S ribosomal subunit; part of the 5S rRNA/L5/L18/L25 subcomplex. Contacts the 5S rRNA and the P site tRNA. Forms a bridge to the 30S subunit in the 70S ribosome.

Its function is as follows. This is one of the proteins that bind and probably mediate the attachment of the 5S RNA into the large ribosomal subunit, where it forms part of the central protuberance. In the 70S ribosome it contacts protein S13 of the 30S subunit (bridge B1b), connecting the 2 subunits; this bridge is implicated in subunit movement. Contacts the P site tRNA; the 5S rRNA and some of its associated proteins might help stabilize positioning of ribosome-bound tRNAs. The chain is Large ribosomal subunit protein uL5 from Staphylococcus carnosus (strain TM300).